Here is an 819-residue protein sequence, read N- to C-terminus: MEDGEIEEGMVTADEFPTPEVTTIETIQPPREPGKSPLELLRESKTSVEEIVAKMLSMKKQGNHKSEIRELLTQMFLNFVNLRQANRAILTEEDKVKAETERAKAPVDFTTLQLHNLMYEKSHYVKAIKACRDFKSKYPDIDLVPEQDFFRHAPEAIKDQSLSSDSSHVLMPKRLNFELHQRKELCKHRARLEQQKKSLLETIAERKKFLSSLPLHLKSLKKASLPVQNHLGIQHTKKLKQHNLAELLPPPLYVLYSQLLAQKEAFEESIELEVVGSLKDAQAYARQQSRKDSGMSSNTESSRLEDDGPDDDDDGQRRRKRPKKLTSKEGSDKAGLYQVHPLKIVLHIYDDEIPDTKSLKLVILKFEYLLKLNVVCVGAEGSQDGPEKNIFCNLFPDDAGLEPPHQSTKLILGDGQTFDENRTSRPYKWVQHLAGIDISPVLLGQEAHNTDPAKSDTFVPDLSLYRQQHRVQTVLRRIRLRKKAHLALAEQLDLLMKHELPVVNCEDAPWALHKVLCALDSWLHIQSSASKSCSLTLNSVEQVPEPMEIDVDGRSISGKEDFESIREDGELPSLVTAAASLTSSNHTPSKVSNQARSRQLALMTKNLDSPISKGKSPSFKKYEDDLDLVLDDDSEIDEPTGRTEAHVEELCPEKADNSWVDYGSREFALVFSRKTDGGKLWKLEAMVQISMEYPLRPPLFSLSLHASSSSGNENGTNESDHYNELRAMEAEVNLHMLKIIPSDQENYLLSHQIRCLAMLFDYYVDDPSPDSKRGTATTVVDVGLCKPVDGKLLVRSFRGRDHRKMISWKGRGCASGYPC.

Positions 285–332 are disordered; the sequence is ARQQSRKDSGMSSNTESSRLEDDGPDDDDDGQRRRKRPKKLTSKEGSD.

It belongs to the THOC5 family. As to quaternary structure, component of the THO complex, which is composed of THO1, THO2, THO3, THO5, THO6 and THO7.

Its subcellular location is the nucleus. Acts as a component of the THO subcomplex of the TREX complex which is thought to couple mRNA transcription, processing and nuclear export. This Arabidopsis thaliana (Mouse-ear cress) protein is THO complex subunit 5B (THO5B).